A 537-amino-acid polypeptide reads, in one-letter code: 2-succinyl-5-enolpyruvyl-6-hydroxy-3-cyclohexene-1-carboxylate synthase (537 aa).

Belongs to the TPP enzyme family. MenD subfamily. Homodimer. It depends on Mg(2+) as a cofactor. Requires Mn(2+) as cofactor. The cofactor is thiamine diphosphate.

The enzyme catalyses isochorismate + 2-oxoglutarate + H(+) = 5-enolpyruvoyl-6-hydroxy-2-succinyl-cyclohex-3-ene-1-carboxylate + CO2. It functions in the pathway quinol/quinone metabolism; 1,4-dihydroxy-2-naphthoate biosynthesis; 1,4-dihydroxy-2-naphthoate from chorismate: step 2/7. Its pathway is quinol/quinone metabolism; menaquinone biosynthesis. In terms of biological role, catalyzes the thiamine diphosphate-dependent decarboxylation of 2-oxoglutarate and the subsequent addition of the resulting succinic semialdehyde-thiamine pyrophosphate anion to isochorismate to yield 2-succinyl-5-enolpyruvyl-6-hydroxy-3-cyclohexene-1-carboxylate (SEPHCHC). This Dechloromonas aromatica (strain RCB) protein is 2-succinyl-5-enolpyruvyl-6-hydroxy-3-cyclohexene-1-carboxylate synthase.